We begin with the raw amino-acid sequence, 125 residues long: MPTLNQLIRHGREEKRRTDRTRALDQCPQKQGVCLRVSTRTPKKPNSALRKIAKVRLSNRHDIFAYIPGEGHNLQEHSIVLIRGGRVKDLPGVKFHCIRGVKDLLGIPDRRKGRSKYGAEKPKSR.

It belongs to the universal ribosomal protein uS12 family.

The protein resides in the mitochondrion. Its function is as follows. Protein S12 is involved in the translation initiation step. This chain is Small ribosomal subunit protein uS12m (RPS12), found in Helianthus annuus (Common sunflower).